Here is a 101-residue protein sequence, read N- to C-terminus: Small ribosomal subunit protein uS14 (101 aa).

It belongs to the universal ribosomal protein uS14 family. Part of the 30S ribosomal subunit. Contacts proteins S3 and S10.

Functionally, binds 16S rRNA, required for the assembly of 30S particles and may also be responsible for determining the conformation of the 16S rRNA at the A site. The polypeptide is Small ribosomal subunit protein uS14 (Ehrlichia canis (strain Jake)).